Here is a 176-residue protein sequence, read N- to C-terminus: Centromere protein R (176 aa).

Lysine 8 participates in a covalent cross-link: Glycyl lysine isopeptide (Lys-Gly) (interchain with G-Cter in SUMO2). The residue at position 17 (serine 17) is a Phosphoserine. The interval 20–50 (PSKIVRKKSITAYSPTTGTYQLSPFSSPATP) is DD1. A Glycyl lysine isopeptide (Lys-Gly) (interchain with G-Cter in SUMO2) cross-link involves residue lysine 22. Residue serine 28 is modified to Phosphoserine. The span at 34-48 (PTTGTYQLSPFSSPA) shows a compositional bias: polar residues. Positions 34 to 78 (PTTGTYQLSPFSSPATPKEQEHRNGPSNETRKRSNLSSPVRQEST) are disordered. The span at 51–65 (KEQEHRNGPSNETRK) shows a compositional bias: basic and acidic residues. The Nuclear localization signal motif lies at 63 to 66 (TRKR). Serine 71 carries the phosphoserine modification. Residues 82 to 112 (RDGFMVLLSKIEISSEKTMEIMKNLSSIQAL) adopt a coiled-coil conformation. Positions 171–175 (LKAIL) match the LXXIL motif motif.

As to quaternary structure, homodimer; mediated by the coiled coil domain. Interacts with CCNA2 and MTA1. Interacts with NFKB1 NF-kappa-B subunit. Component of the CENPA-CAD complex, composed of CENPI, CENPK, CENPL, CENPO, CENPP, CENPQ, CENPR and CENPS. The CENPA-CAD complex interacts with the CENPA-NAC complex, at least composed of CENPA, CENPC, CENPH, CENPM, CENPN, CENPT and CENPU. Interacts with TASOR. In terms of tissue distribution, expressed in the spermatogonia and spermatocytes.

It is found in the nucleus. Its subcellular location is the chromosome. The protein resides in the centromere. It localises to the kinetochore. Transcription coregulator that can have both coactivator and corepressor functions. Involved in the coactivation of nuclear receptors for retinoid X (RXRs) and thyroid hormone (TRs) in a ligand-dependent fashion. In contrast, it does not coactivate nuclear receptors for retinoic acid, vitamin D, progesterone receptor, nor glucocorticoid. Acts as a coactivator for estrogen receptor alpha. Acts as a transcriptional corepressor via its interaction with the NFKB1 NF-kappa-B subunit, possibly by interfering with the transactivation domain of NFKB1. Induces apoptosis in breast cancer cells, but not in other cancer cells, via a caspase-2 mediated pathway that involves mitochondrial membrane permeabilization but does not require other caspases. May also act as an inhibitor of cyclin A-associated kinase. Also acts a component of the CENPA-CAD (nucleosome distal) complex, a complex recruited to centromeres which is involved in assembly of kinetochore proteins, mitotic progression and chromosome segregation. May be involved in incorporation of newly synthesized CENPA into centromeres via its interaction with the CENPA-NAC complex. This Mus musculus (Mouse) protein is Centromere protein R (Itgb3bp).